The following is a 305-amino-acid chain: Acetyl-coenzyme A carboxylase carboxyl transferase subunit beta (305 aa).

Residues 27–296 enclose the CoA carboxyltransferase N-terminal domain; the sequence is LWVKCSACRE…PAAKADLAAR (270 aa). 4 residues coordinate Zn(2+): Cys31, Cys34, Cys50, and Cys53. Residues 31–53 form a C4-type zinc finger; it reads CSACRELIYKKQLNDNLKVCPKC.

It belongs to the AccD/PCCB family. As to quaternary structure, acetyl-CoA carboxylase is a heterohexamer composed of biotin carboxyl carrier protein (AccB), biotin carboxylase (AccC) and two subunits each of ACCase subunit alpha (AccA) and ACCase subunit beta (AccD). The cofactor is Zn(2+).

Its subcellular location is the cytoplasm. It carries out the reaction N(6)-carboxybiotinyl-L-lysyl-[protein] + acetyl-CoA = N(6)-biotinyl-L-lysyl-[protein] + malonyl-CoA. It functions in the pathway lipid metabolism; malonyl-CoA biosynthesis; malonyl-CoA from acetyl-CoA: step 1/1. In terms of biological role, component of the acetyl coenzyme A carboxylase (ACC) complex. Biotin carboxylase (BC) catalyzes the carboxylation of biotin on its carrier protein (BCCP) and then the CO(2) group is transferred by the transcarboxylase to acetyl-CoA to form malonyl-CoA. This Chloroflexus aggregans (strain MD-66 / DSM 9485) protein is Acetyl-coenzyme A carboxylase carboxyl transferase subunit beta.